A 264-amino-acid polypeptide reads, in one-letter code: 4-oxalocrotonate decarboxylase (264 aa).

It belongs to the hydratase/decarboxylase family.

The catalysed reaction is (3E)-2-oxohex-3-enedioate + H(+) = 2-oxopent-4-enoate + CO2. It participates in xenobiotic degradation; toluene degradation. The polypeptide is 4-oxalocrotonate decarboxylase (xylI) (Pseudomonas putida (Arthrobacter siderocapsulatus)).